The following is a 251-amino-acid chain: Triosephosphate isomerase (251 aa).

Asn-9–Lys-11 provides a ligand contact to substrate. Residue His-95 is the Electrophile of the active site. Residue Glu-167 is the Proton acceptor of the active site. Substrate is bound by residues Gly-173, Ser-213, and Gly-234 to Gly-235.

Belongs to the triosephosphate isomerase family. Homodimer.

The protein localises to the cytoplasm. It catalyses the reaction D-glyceraldehyde 3-phosphate = dihydroxyacetone phosphate. It participates in carbohydrate biosynthesis; gluconeogenesis. Its pathway is carbohydrate degradation; glycolysis; D-glyceraldehyde 3-phosphate from glycerone phosphate: step 1/1. In terms of biological role, involved in the gluconeogenesis. Catalyzes stereospecifically the conversion of dihydroxyacetone phosphate (DHAP) to D-glyceraldehyde-3-phosphate (G3P). The sequence is that of Triosephosphate isomerase from Geotalea uraniireducens (strain Rf4) (Geobacter uraniireducens).